A 312-amino-acid chain; its full sequence is MATSANLDIGAQLIVEECPSSYISGMPDIKLEHQLDPNPDEGAAQGVAMGMKFILPNRFDMNVCSRFVKSLNEEDSKNIQDQVNSDLEVASVLFKAECNIHTSPSPGIQVRHVYTPSTTKHFSPIKQSTTLTNKHRGNEVSTTPLLANSLSAHQLAAQGEMLYLATRIEQENVINHTDEEGFTPLMWAAAHGQIAVVEFLLQNGADPQLLGKGRESALSLACSKGYTDIVKMLLDCGVDVNEYDWNGGTPLLYAVHGNHVKCVKMLLENGADPTIETDSGYNSMDLAVALGYRGVQQAIESHLLKLLQNIRE.

ANK repeat units follow at residues alanine 147–glutamate 179, glutamate 180–lysine 212, glycine 213–tryptophan 245, asparagine 246–aspartate 278, and serine 279–glutamate 312.

In terms of assembly, interacts (via ANK repeats) with CCDC8 (via PxLPxI/L motif); mediates the interaction with the 3M complex which is composed of CCDC8, CUL7 and OBSL1. Interacts (via ANK repeats) with HDAC4 (via PxLPxI/L motif). Interacts (via ANK repeats) with HDAC5 (via PxLPxI/L motif). Interacts (via ANK repeats) with LRP2/megalin (via PxLPxI/L motif). Interacts (via ANK repeats) with RFX7 (via PxLPxI/L motif). Interacts with AHRR. Interacts with NEK6.

It is found in the cytoplasm. It localises to the cytoskeleton. Its subcellular location is the membrane. Functionally, may regulate the interaction between the 3M complex and the histone deacetylases HDAC4 and HDAC5. May also regulate LRP2/megalin. In Mus musculus (Mouse), this protein is Ankyrin repeat family A protein 2 (Ankra2).